We begin with the raw amino-acid sequence, 523 residues long: Galactarate dehydratase (L-threo-forming) (523 aa).

Belongs to the UxaA family. In terms of assembly, homodimer. Requires Fe(2+) as cofactor.

It catalyses the reaction galactarate = 5-dehydro-4-deoxy-D-glucarate + H2O. It participates in carbohydrate acid metabolism; galactarate degradation; D-glycerate from galactarate: step 1/3. Its function is as follows. Catalyzes the dehydration of galactarate to form 5-dehydro-4-deoxy-D-glucarate (5-KDG). The sequence is that of Galactarate dehydratase (L-threo-forming) from Escherichia coli (strain K12).